The sequence spans 246 residues: Glandular kallikrein (246 aa).

A propeptide spanning residues 1–7 is cleaved from the precursor; that stretch reads APPIQSR. In terms of domain architecture, Peptidase S1 spans 8 to 243; the sequence is IIGGRECEKN…YLDWINDTIT (236 aa). 5 cysteine pairs are disulfide-bonded: Cys14–Cys158, Cys33–Cys49, Cys135–Cys204, Cys169–Cys183, and Cys194–Cys219. His48 serves as the catalytic Charge relay system. Asn85 carries an N-linked (GlcNAc...) asparagine glycan. Positions 85–104 are kallikrein (autolysis) loop; sequence NLSLLKXHTKADGKDYSHDL. The active-site Charge relay system is Asp103. Ser198 serves as the catalytic Charge relay system. An N-linked (GlcNAc...) asparagine glycan is attached at Asn239.

It belongs to the peptidase S1 family. Kallikrein subfamily. Monomer.

The enzyme catalyses Preferential cleavage of Arg-|-Xaa bonds in small molecule substrates. Highly selective action to release kallidin (lysyl-bradykinin) from kininogen involves hydrolysis of Met-|-Xaa or Leu-|-Xaa.. Its function is as follows. Glandular kallikreins cleave Met-Lys and Arg-Ser bonds in kininogen to release Lys-bradykinin. The chain is Glandular kallikrein from Sus scrofa (Pig).